A 247-amino-acid polypeptide reads, in one-letter code: uncharacterized protein (247 aa).

Transmembrane regions (helical) follow at residues 108-128, 136-156, and 194-214; these read WYIN…FLII, IFSV…NIIC, and GAKL…LFFI.

It is found in the membrane. This is an uncharacterized protein from Caenorhabditis elegans.